The chain runs to 264 residues: Virulence plasmid protein pGP3-D (264 aa).

This is Virulence plasmid protein pGP3-D from Chlamydia muridarum (strain MoPn / Nigg).